Consider the following 50-residue polypeptide: Disintegrin pyramidin-A (50 aa).

The Disintegrin domain occupies 1–47; sequence DCASGPCCRDCKFLKEGTICKRARGDNMDDYCNGKTCDCPRNPHKGE. 4 cysteine pairs are disulfide-bonded: cysteine 2–cysteine 11, cysteine 7–cysteine 32, cysteine 8–cysteine 37, and cysteine 20–cysteine 39. The Cell attachment site motif lies at 24 to 26; it reads RGD.

It belongs to the venom metalloproteinase (M12B) family. P-II subfamily. P-IIa sub-subfamily. As to quaternary structure, monomer (disintegrin). As to expression, expressed by the venom gland.

The protein resides in the secreted. In terms of biological role, inhibits ADP-induced human platelet aggregation. The sequence is that of Disintegrin pyramidin-A from Echis pyramidum leakeyi (Leakey's carpet viper).